A 321-amino-acid polypeptide reads, in one-letter code: Lipoyl synthase (321 aa).

The [4Fe-4S] cluster site is built by C68, C73, C79, C94, C98, C101, and S308. Residues 80-297 (FNHGTATFMI…KAEAMAMGFT (218 aa)) form the Radical SAM core domain.

This sequence belongs to the radical SAM superfamily. Lipoyl synthase family. [4Fe-4S] cluster is required as a cofactor.

The protein localises to the cytoplasm. The catalysed reaction is [[Fe-S] cluster scaffold protein carrying a second [4Fe-4S](2+) cluster] + N(6)-octanoyl-L-lysyl-[protein] + 2 oxidized [2Fe-2S]-[ferredoxin] + 2 S-adenosyl-L-methionine + 4 H(+) = [[Fe-S] cluster scaffold protein] + N(6)-[(R)-dihydrolipoyl]-L-lysyl-[protein] + 4 Fe(3+) + 2 hydrogen sulfide + 2 5'-deoxyadenosine + 2 L-methionine + 2 reduced [2Fe-2S]-[ferredoxin]. It participates in protein modification; protein lipoylation via endogenous pathway; protein N(6)-(lipoyl)lysine from octanoyl-[acyl-carrier-protein]: step 2/2. Functionally, catalyzes the radical-mediated insertion of two sulfur atoms into the C-6 and C-8 positions of the octanoyl moiety bound to the lipoyl domains of lipoate-dependent enzymes, thereby converting the octanoylated domains into lipoylated derivatives. The chain is Lipoyl synthase from Enterobacter sp. (strain 638).